The chain runs to 441 residues: ATP-dependent protease ATPase subunit HslU (441 aa).

ATP-binding positions include Ile-18, 60–65 (GVGKTE), Asp-254, Glu-319, and Arg-391.

It belongs to the ClpX chaperone family. HslU subfamily. In terms of assembly, a double ring-shaped homohexamer of HslV is capped on each side by a ring-shaped HslU homohexamer. The assembly of the HslU/HslV complex is dependent on binding of ATP.

The protein localises to the cytoplasm. Its function is as follows. ATPase subunit of a proteasome-like degradation complex; this subunit has chaperone activity. The binding of ATP and its subsequent hydrolysis by HslU are essential for unfolding of protein substrates subsequently hydrolyzed by HslV. HslU recognizes the N-terminal part of its protein substrates and unfolds these before they are guided to HslV for hydrolysis. This chain is ATP-dependent protease ATPase subunit HslU, found in Shewanella denitrificans (strain OS217 / ATCC BAA-1090 / DSM 15013).